We begin with the raw amino-acid sequence, 428 residues long: Large envelope protein (428 aa).

A lipid anchor (N-myristoyl glycine; by host) is attached at glycine 2. The pre-S1 stretch occupies residues 2–145; that stretch reads GNNIKVTFDP…PPLRDTHPHL (144 aa). The tract at residues 2–204 is pre-S; sequence GNNIKVTFDP…PLTIGDPVLS (203 aa). Residues 2 to 211 lie on the Virion surface; in external conformation side of the membrane; sequence GNNIKVTFDP…VLSTEMSPSG (210 aa). Topologically, residues 2-283 are intravirion; in internal conformation; that stretch reads GNNIKVTFDP…NGFRWMYLRR (282 aa). A glycan (N-linked (GlcNAc...) asparagine) is linked at asparagine 3. Residues 110 to 144 form a disordered region; it reads RDIPRGIVPPQTPSNRDQRRKPTPLTPPLRDTHPH. Residues 146-204 are pre-S2; the sequence is TMKNQTGHLQGFAEGLRALTTSDHHNSAYGDPFTTLSPVVPTVSTTLSPPLTIGDPVLS. Residues 212–232 traverse the membrane as a helical segment; that stretch reads LLGLLAGLQVVYFLWTKILTI. At 233-283 the chain is on the intravirion; in external conformation side; sequence AQSLDWWWTSLSFPGGIPECTGQNLQFQTCKHLPTSCPPTCNGFRWMYLRR. Residues 284–304 form a helical membrane-spanning segment; it reads FIIYLLVLLLFLTFLLVLLDW. Residues 305-376 lie on the Virion surface side of the membrane; it reads KGLLPVCPMM…WALARFSWLS (72 aa). An N-linked (GlcNAc...) asparagine; by host glycan is attached at asparagine 348. Residues 377 to 397 traverse the membrane as a helical segment; it reads LLVPLLQWLGGISLTVWLLLI. At 398 to 403 the chain is on the intravirion side; that stretch reads WMIWFW. A helical membrane pass occupies residues 404–426; the sequence is GPVLMSILPPFIPIFALFFLIWA. The Virion surface segment spans residues 427-428; sequence YI.

This sequence belongs to the orthohepadnavirus major surface antigen family. As to quaternary structure, in its internal form (Li-HBsAg), interacts with the capsid protein and with the isoform S. Interacts with host chaperone CANX. In terms of assembly, associates with host chaperone CANX through its pre-S2 N glycan; this association may be essential for isoform M proper secretion. Interacts with isoform L. Interacts with the antigens of satellite virus HDV (HDVAgs); this interaction is required for encapsidation of HDV genomic RNA. Post-translationally, isoform M is N-terminally acetylated by host at a ratio of 90%, and N-glycosylated by host at the pre-S2 region. In terms of processing, myristoylated.

It localises to the virion membrane. Its function is as follows. The large envelope protein exists in two topological conformations, one which is termed 'external' or Le-HBsAg and the other 'internal' or Li-HBsAg. In its external conformation the protein attaches the virus to cell receptors and thereby initiating infection. This interaction determines the species specificity and liver tropism. This attachment induces virion internalization predominantly through caveolin-mediated endocytosis. The large envelope protein also assures fusion between virion membrane and endosomal membrane. In its internal conformation the protein plays a role in virion morphogenesis and mediates the contact with the nucleocapsid like a matrix protein. Functionally, the middle envelope protein plays an important role in the budding of the virion. It is involved in the induction of budding in a nucleocapsid independent way. In this process the majority of envelope proteins bud to form subviral lipoprotein particles of 22 nm of diameter that do not contain a nucleocapsid. This chain is Large envelope protein, found in Ground squirrel hepatitis virus (strain 27) (GSHV).